Reading from the N-terminus, the 813-residue chain is Hyaluronate lyase HylB (813 aa).

A signal peptide (tat-type signal) is located at residues 1 to 32 (MFGTPSRRTFLTASALSAMALAASPTVTDAIA). Active-site residues include N222, H272, and Y281.

It belongs to the polysaccharide lyase 8 family. Post-translationally, predicted to be exported by the Tat system. The position of the signal peptide cleavage has not been experimentally proven.

The protein resides in the secreted. The catalysed reaction is [hyaluronan](n) = n 3-(4-deoxy-beta-D-gluc-4-enuronosyl)-N-acetyl-D-glucosamine + H2O. Functionally, degrades hyaluronic acid (HA) exclusively into HA disaccharides (HA-2). Produced HA-2s confer anti-inflammatory properties leading to reduced immunopathology in the mouse model of acne. In Cutibacterium acnes (strain DSM 16379 / KPA171202) (Propionibacterium acnes), this protein is Hyaluronate lyase HylB.